A 354-amino-acid chain; its full sequence is Guanine nucleotide-binding protein G(i) subunit alpha-1 (354 aa).

Gly-2 is lipidated: N-myristoyl glycine. Cys-3 is lipidated: S-palmitoyl cysteine. Residues 32 to 354 (REVKLLLLGA…KNNLKDCGLF (323 aa)) enclose the G-alpha domain. Positions 35-48 (KLLLLGAGESGKST) are G1 motif. Residues 43–48 (ESGKST), 150–151 (DS), and 175–178 (LRTR) each bind GTP. Residue Ser-47 participates in Mg(2+) binding. The segment at 173 to 181 (DVLRTRVKT) is G2 motif. Residue Thr-181 coordinates Mg(2+). The segment at 196-205 (FKMFDVGGQR) is G3 motif. GTP contacts are provided by residues 200–204 (DVGGQ), 269–272 (NKKD), and Ala-326. Residues 265 to 272 (ILFLNKKD) are G4 motif. The tract at residues 324-329 (TCATDT) is G5 motif.

The protein belongs to the G-alpha family. G(i/o/t/z) subfamily. In terms of assembly, heterotrimeric G proteins are composed of 3 units; alpha, beta and gamma. The alpha chain contains the guanine nucleotide binding site. Part of a spindle orientation complex at least composed of GNAI1, GPSM2 and NUMA1. Identified in complex with the beta subunit GNB1 and the gamma subunit GNG1. Identified in complex with the beta subunit GNB1 and the gamma subunit GNG2. Component of the TAS2R14-GNAI1 complex, consisting of TAS2R14, GNAI1, GNB1 and GNG2; within the complex interacts with TAS2R14; this complex plays a role in the perception of bitterness. GTP binding causes dissociation of the heterotrimer, liberating the individual subunits so that they can interact with downstream effector proteins. Interacts (GDP-bound form) with GPSM1; this inhibits guanine nucleotide exchange and GTP binding. Interacts (GDP-bound form) with GPSM2 (via GoLoco domains); this inhibits guanine nucleotide exchange. Interacts with RGS10; this strongly enhances GTP hydrolysis. Interacts with RGS1 and RGS16; this strongly enhances GTPase activity. Interacts with RGS4. Interacts with RGS12. Interacts (via active GTP- or inactive GDP-bound forms) with RGS14 (via RGS and GoLoco domains). Interacts with RGS3, RGS6, RGS7, RGS8, RGS17, RGS18 and RGS20 (in vitro). Interacts (GDP-bound form) with RIC8A (via C-terminus); promoting GNAI1 folding and association with the plasma membrane. Interacts (inactive GDP-bound form) with NUCB1 (via GBA motif); the interaction leads to activation of GNAI1. Interacts (inactive GDP-bound form) with CCDC88C/DAPLE (via GBA motif); the interaction leads to activation of GNAI1. Interacts (inactive GDP-bound form) with CCDC8A/GIV (via GBA motif). Post-translationally, myristoylation at Gly-2 is required for membrane anchoring before palmitoylation. In terms of processing, palmitoylation at Cys-3 varies with membrane lipid composition. As to expression, mainly expressed in the brain, lung and kidney.

It is found in the nucleus. The protein resides in the cytoplasm. It localises to the cell membrane. The protein localises to the cytoskeleton. Its subcellular location is the microtubule organizing center. It is found in the centrosome. The protein resides in the cell cortex. It localises to the membrane. The catalysed reaction is GTP + H2O = GDP + phosphate + H(+). Functionally, guanine nucleotide-binding proteins (G proteins) function as transducers downstream of G protein-coupled receptors (GPCRs) in numerous signaling cascades. The alpha chain contains the guanine nucleotide binding site and alternates between an active, GTP-bound state and an inactive, GDP-bound state. Signaling by an activated GPCR promotes GDP release and GTP binding. The alpha subunit has a low GTPase activity that converts bound GTP to GDP, thereby terminating the signal. Both GDP release and GTP hydrolysis are modulated by numerous regulatory proteins. Signaling is mediated via effector proteins, such as adenylate cyclase. Inhibits adenylate cyclase activity of ADCY1, ADCY5 and ADCY6, leading to decreased intracellular cAMP levels. The inactive GDP-bound form prevents the association of RGS14 with centrosomes and is required for the translocation of RGS14 from the cytoplasm to the plasma membrane. Required for normal cytokinesis during mitosis. Required for cortical dynein-dynactin complex recruitment during metaphase. The sequence is that of Guanine nucleotide-binding protein G(i) subunit alpha-1 (GNAI1) from Cavia porcellus (Guinea pig).